Consider the following 801-residue polypeptide: Transducin beta-like protein 3 (801 aa).

At A2 the chain carries N-acetylalanine. 13 WD repeats span residues 64 to 105, 107 to 146, 149 to 190, 193 to 232, 245 to 284, 290 to 329, 332 to 372, 374 to 413, 419 to 459, 477 to 516, 519 to 560, 562 to 602, and 604 to 642; these read EDQE…RLWK, IHTA…GTHH, GSPG…CLAV, AHYS…TTRT, LPEQ…CVYT, GLRQ…LQKQ, GYSE…CQIL, GHTD…QVAC, GHTH…LAKS, CHDK…LLGV, GHRR…KTFE, HDAS…RTLD, and HEDK…EQAE. S257 is subject to Phosphoserine. K407 is covalently cross-linked (Glycyl lysine isopeptide (Lys-Gly) (interchain with G-Cter in SUMO2)).

In terms of assembly, part of the small subunit (SSU) processome, composed of more than 70 proteins and the RNA chaperone small nucleolar RNA (snoRNA) U3.

The protein localises to the nucleus. It is found in the nucleolus. Its function is as follows. Part of the small subunit (SSU) processome, first precursor of the small eukaryotic ribosomal subunit. During the assembly of the SSU processome in the nucleolus, many ribosome biogenesis factors, an RNA chaperone and ribosomal proteins associate with the nascent pre-rRNA and work in concert to generate RNA folding, modifications, rearrangements and cleavage as well as targeted degradation of pre-ribosomal RNA by the RNA exosome. This Mus musculus (Mouse) protein is Transducin beta-like protein 3 (Tbl3).